We begin with the raw amino-acid sequence, 141 residues long: MWNLYFLKLLIDVLNIKVKNFRIIKKMKRKYILKKESEITPVFKSKKRYGNSLFIIYYVKQTAFPHFKFALSVGKKYGKAHERNLIKRRLRAIIRSVSPCLNPKMFFVIVIKAQAKNLTFQQLKTFFLQFATKTRILLSNK.

This sequence belongs to the RnpA family. As to quaternary structure, consists of a catalytic RNA component (M1 or rnpB) and a protein subunit.

The enzyme catalyses Endonucleolytic cleavage of RNA, removing 5'-extranucleotides from tRNA precursor.. In terms of biological role, RNaseP catalyzes the removal of the 5'-leader sequence from pre-tRNA to produce the mature 5'-terminus. It can also cleave other RNA substrates such as 4.5S RNA. The protein component plays an auxiliary but essential role in vivo by binding to the 5'-leader sequence and broadening the substrate specificity of the ribozyme. This chain is Ribonuclease P protein component, found in Onion yellows phytoplasma (strain OY-M).